A 386-amino-acid polypeptide reads, in one-letter code: Phosphomevalonate dehydratase large subunit (386 aa).

Residues Gly48, Val49, Ser50, Asn53, Arg63, Asn79, and Pro80 each contribute to the (R)-5-phosphomevalonate site. Cys110 lines the [4Fe-4S] cluster pocket. Positions 129 and 130 each coordinate (R)-5-phosphomevalonate. [4Fe-4S] cluster is bound by residues Cys283 and Cys342. Lys361 lines the (R)-5-phosphomevalonate pocket.

It belongs to the AcnX type II large subunit family. As to quaternary structure, heterodimer composed of a large subunit (PMDh-L) and a small subunit (PMDh-S). It depends on [4Fe-4S] cluster as a cofactor.

The catalysed reaction is (R)-5-phosphomevalonate = (2E)-3-methyl-5-phosphooxypent-2-enoate + H2O. The protein operates within isoprenoid biosynthesis; isopentenyl diphosphate biosynthesis via mevalonate pathway. Functionally, component of a hydro-lyase that catalyzes the dehydration of mevalonate 5-phosphate (MVA5P) to form trans-anhydromevalonate 5-phosphate (tAHMP). Involved in the archaeal mevalonate (MVA) pathway, which provides fundamental precursors for isoprenoid biosynthesis, such as isopentenyl diphosphate (IPP) and dimethylallyl diphosphate (DMAPP). The chain is Phosphomevalonate dehydratase large subunit from Thermococcus kodakarensis (strain ATCC BAA-918 / JCM 12380 / KOD1) (Pyrococcus kodakaraensis (strain KOD1)).